Here is a 303-residue protein sequence, read N- to C-terminus: Glutathione transport system permease protein GsiD (303 aa).

The next 6 membrane-spanning stretches (helical) occupy residues 40-60, 105-125, 144-164, 165-185, 222-242, and 266-286; these read AMTAALFVILLIVVAIFARWI, LAAGVFAVFIGVAIGTLLGLL, LFAFPGILLAIAVVAVLGSGI, ANVIIAVAIFSIPAFARLVRG, IVVFFTMRIGTSIISAASLSF, and VIAPHVAVFPALAIFLTVLAF. The ABC transmembrane type-1 domain occupies 101–290; the sequence is AQISLAAGVF…LTVLAFNLLG (190 aa).

The protein belongs to the binding-protein-dependent transport system permease family. As to quaternary structure, the complex is composed of two ATP-binding proteins (GsiA), two transmembrane proteins (GsiC and GsiD) and a solute-binding protein (GsiB).

It is found in the cell inner membrane. In terms of biological role, part of the ABC transporter complex GsiABCD involved in glutathione import. Probably responsible for the translocation of the substrate across the membrane. The protein is Glutathione transport system permease protein GsiD of Shigella flexneri serotype 5b (strain 8401).